Here is a 461-residue protein sequence, read N- to C-terminus: ATP synthase subunit beta (461 aa).

Residue 151 to 158 (GGAGVGKT) participates in ATP binding.

This sequence belongs to the ATPase alpha/beta chains family. In terms of assembly, F-type ATPases have 2 components, CF(1) - the catalytic core - and CF(0) - the membrane proton channel. CF(1) has five subunits: alpha(3), beta(3), gamma(1), delta(1), epsilon(1). CF(0) has three main subunits: a(1), b(2) and c(9-12). The alpha and beta chains form an alternating ring which encloses part of the gamma chain. CF(1) is attached to CF(0) by a central stalk formed by the gamma and epsilon chains, while a peripheral stalk is formed by the delta and b chains.

The protein resides in the cell inner membrane. It catalyses the reaction ATP + H2O + 4 H(+)(in) = ADP + phosphate + 5 H(+)(out). In terms of biological role, produces ATP from ADP in the presence of a proton gradient across the membrane. The catalytic sites are hosted primarily by the beta subunits. The chain is ATP synthase subunit beta from Coxiella burnetii (strain Dugway 5J108-111).